The chain runs to 726 residues: Transmembrane channel-like protein 8 (726 aa).

Residues 1-114 lie on the Cytoplasmic side of the membrane; that stretch reads MLLPRSVSSE…GIRSYFTFLR (114 aa). Position 6 is a phosphoserine (Ser6). A helical membrane pass occupies residues 115-135; that stretch reads FLLLLNLLSLLLTASFVLLPL. Residues 136–200 lie on the Lumenal side of the membrane; sequence VWLRPPDPGP…VGPESSSVYS (65 aa). The N-linked (GlcNAc...) asparagine glycan is linked to Asn148. The helical transmembrane segment at 201–221 threads the bilayer; it reads IRLAYLLSPLACLLLCFCGTL. Topologically, residues 222-299 are cytoplasmic; it reads RRMVKGLPQK…AQTACRLLSY (78 aa). Residues 300–320 traverse the membrane as a helical segment; the sequence is LRVNVLNGLLVVGAISAIFWA. Residues 321–338 lie on the Lumenal side of the membrane; sequence TKYSQDNKEESLFLLLQY. A helical transmembrane segment spans residues 339–359; the sequence is LPPGVIALVNFLGPLLFTFLV. Topologically, residues 360-426 are cytoplasmic; the sequence is QLENYPPNTE…QCWENSVGEE (67 aa). Positions 362–530 are TMC domain; the sequence is ENYPPNTEVN…SSRPFRASSS (169 aa). Residues 427–447 traverse the membrane as a helical segment; sequence LYKLSIFNFLLTVAFAFLVTL. Residues 448–488 lie on the Lumenal side of the membrane; sequence PRRLLVDRFSGRFWAWLEREEFLVPKNVLDIVAGQTVTWMG. The chain crosses the membrane as a helical span at residues 489–509; the sequence is LFYCPLLPLLNSVFLFLTFYI. Residues 510 to 531 lie on the Cytoplasmic side of the membrane; sequence KKYTLLKNSRASSRPFRASSST. A helical membrane pass occupies residues 532–552; that stretch reads FFFQLVLLLGLLLAAVPLGYV. Residues 553 to 594 are Lumenal-facing; that stretch reads VSSIHSSWDCGLFTNYSAPWQVVPELVALGLPPIGQRALHYL. N-linked (GlcNAc...) asparagine glycosylation is present at Asn567. Residues 595-615 traverse the membrane as a helical segment; sequence GSHAFSFPLLIMLSLVLTVCV. Over 616-726 the chain is Cytoplasmic; the sequence is SQTQANARAI…RFRFPSGAEL (111 aa). A disordered region spans residues 651–726; that stretch reads PEPGPSDSPG…RFRFPSGAEL (76 aa). A compositionally biased stretch (pro residues) spans 652–662; sequence EPGPSDSPGPK. Phosphoserine occurs at positions 658 and 673.

Belongs to the TMC family. In terms of assembly, interacts with TMC6. Interacts and forms a complex with TMC6 and CIB1; the interaction stabilizes each component of the complex. Interacts and forms a complex with TMC6 and SLC30A1/ZNT1; the interaction regulates zinc transport into the ER. Interacts with TRADD; the interaction competes with TRADD/RIPK1/TRAF2/cIAPs complex I formation and facilites complex II formation. As to quaternary structure, (Microbial infection) Interacts with human papillomavirus 16/HPV16 protein E5; the interaction alleviates TMC8-mediated transcription factors inhibition. In terms of tissue distribution, expressed in placenta, prostate and testis.

It is found in the endoplasmic reticulum membrane. The protein localises to the golgi apparatus membrane. It localises to the nucleus membrane. Acts as a regulatory protein involved in the regulation of numerous cellular processes. Together with its homolog TMC6/EVER1, forms a complex with calcium-binding protein CIB1 in lymphocytes and keratynocytes where TMC6 and TMC8 stabilize CIB1 levels and reciprocally. Together with TMC6, also forms a complex with and activates zinc transporter ZNT1 at the ER membrane of keratynocytes, thereby facilitating zinc uptake into the ER. Also inhibits receptor-mediated calcium release from ER stores and calcium activated and volume regulated chloride channels. Down-regulates the activity of transcription factors induced by zinc and cytokines. Also sequesters TRADD which impairs the recruitment of TRAF2 and RIPK1 in the pro-survival complex I and promotes proapoptotic complex II formation, and may therefore be involved in TNF-induced cell death/survival decisions. The protein is Transmembrane channel-like protein 8 of Homo sapiens (Human).